We begin with the raw amino-acid sequence, 34 residues long: Photosystem II reaction center protein M (34 aa).

A helical membrane pass occupies residues 6–26 (LGAIATALFVFIPCVFLILLY).

The protein belongs to the PsbM family. PSII is composed of 1 copy each of membrane proteins PsbA, PsbB, PsbC, PsbD, PsbE, PsbF, PsbH, PsbI, PsbJ, PsbK, PsbL, PsbM, PsbT, PsbX, PsbY, PsbZ, Psb30/Ycf12, peripheral proteins PsbO, CyanoQ (PsbQ), PsbU, PsbV and a large number of cofactors. It forms dimeric complexes.

The protein resides in the cellular thylakoid membrane. Its function is as follows. One of the components of the core complex of photosystem II (PSII). PSII is a light-driven water:plastoquinone oxidoreductase that uses light energy to abstract electrons from H(2)O, generating O(2) and a proton gradient subsequently used for ATP formation. It consists of a core antenna complex that captures photons, and an electron transfer chain that converts photonic excitation into a charge separation. This subunit is found at the monomer-monomer interface. In Acaryochloris marina (strain MBIC 11017), this protein is Photosystem II reaction center protein M.